Reading from the N-terminus, the 386-residue chain is Delta(7)-sterol 5(6)-desaturase (386 aa).

The next 3 membrane-spanning stretches (helical) occupy residues 119–139, 172–192, and 206–226; these read VLSLFIITTLFGWLLYFIVAY, IPVMVLLTIPFFLLELHGYSF, and AILWQIPKFILFTDCGIYFLH. Residues 214–337 enclose the Fatty acid hydroxylase domain; that stretch reads FILFTDCGIY…FTTLWDRLGN (124 aa). The Histidine box-1 motif lies at 226 to 230; it reads HRWLH. The Histidine box-2 motif lies at 239-243; the sequence is HKPHH. A helical membrane pass occupies residues 272-292; that stretch reads PLLFPLHKVLYLLLFTFVNFW. The short motif at 314–318 is the Histidine box-3 element; sequence HTVHH.

It belongs to the sterol desaturase family. Requires Fe cation as cofactor.

The protein resides in the endoplasmic reticulum membrane. It carries out the reaction a Delta(7)-sterol + 2 Fe(II)-[cytochrome b5] + O2 + 2 H(+) = a Delta(5),Delta(7)-sterol + 2 Fe(III)-[cytochrome b5] + 2 H2O. Its pathway is steroid metabolism; ergosterol biosynthesis; ergosterol from zymosterol: step 3/5. Its function is as follows. Catalyzes the introduction of a C-5 double bond in the B ring of ergosterol. May contribute to the regulation of ergosterol biosynthesis. This is Delta(7)-sterol 5(6)-desaturase (ERG3) from Candida dubliniensis (strain CD36 / ATCC MYA-646 / CBS 7987 / NCPF 3949 / NRRL Y-17841) (Yeast).